The chain runs to 189 residues: Stathmin-4 (189 aa).

Residues C20 and C22 are each lipidated (S-palmitoyl cysteine). Residues S48–R189 enclose the SLD domain. The residue at position 90 (S90) is a Phosphoserine. The stretch at S90–S188 forms a coiled coil. Residues Q168–R189 form a disordered region.

This sequence belongs to the stathmin family.

It localises to the golgi apparatus. The protein localises to the cell projection. Its subcellular location is the growth cone. It is found in the axon. In terms of biological role, exhibits microtubule-destabilizing activity. The protein is Stathmin-4 (STMN4) of Homo sapiens (Human).